A 366-amino-acid chain; its full sequence is MTLEIFEYLEKYDYEQVVFCQDKESGLKAIIAIHDTTLGPALGGTRMWTYDSEEAAIEDALRLAKGMTYKNAAAGLNLGGAKTVIIGDPRKDKSEAMFRALGRYIQGLNGRYITAEDVGTTVDDMDIIHEETDFVTGISPSFGSSGNPSPVTAYGVYRGMKAAAKEAFGTDNLEGKVIAVQGVGNVAYHLCKHLHAEGAKLIVTDINKEAVQRAVEEFGASAVEPNEIYGVECDIYAPCALGATVNDETIPQLKAKVIAGSANNQLKEDRHGDIIHEMGIVYAPDYVINAGGVINVADELYGYNRERALKRVESIYDTIAKVIEISKRDGIATYVAADRLAEERIASLKNSRSTYLRNGHDIISRR.

Residue lysine 82 is part of the active site. 182-188 (GVGNVAY) contributes to the NAD(+) binding site.

This sequence belongs to the Glu/Leu/Phe/Val dehydrogenases family.

It carries out the reaction L-leucine + NAD(+) + H2O = 4-methyl-2-oxopentanoate + NH4(+) + NADH + H(+). Its pathway is amino-acid degradation; L-leucine degradation; 4-methyl-2-oxopentanoate from L-leucine (dehydrogenase route): step 1/1. In terms of biological role, catalyzes the reversible deamination of L-leucine to 4-methyl-2-oxopentanoate. In Bacillus cereus, this protein is Leucine dehydrogenase (ldh).